The primary structure comprises 303 residues: GTPase Era (303 aa).

Residues Tyr8–Glu176 form the Era-type G domain. The segment at Gly16 to Ser23 is G1. GTP is bound at residue Gly16–Ser23. Positions Gln42 to His46 are G2. Residues Asp63–Gly66 are G3. GTP-binding positions include Asp63–Leu67 and Asn125–Asp128. The tract at residues Asn125–Asp128 is G4. Residues Ile155 to Ala157 are G5. In terms of domain architecture, KH type-2 spans Leu207–Ser284.

This sequence belongs to the TRAFAC class TrmE-Era-EngA-EngB-Septin-like GTPase superfamily. Era GTPase family. In terms of assembly, monomer.

It localises to the cytoplasm. Its subcellular location is the cell inner membrane. Functionally, an essential GTPase that binds both GDP and GTP, with rapid nucleotide exchange. Plays a role in 16S rRNA processing and 30S ribosomal subunit biogenesis and possibly also in cell cycle regulation and energy metabolism. In Yersinia enterocolitica serotype O:8 / biotype 1B (strain NCTC 13174 / 8081), this protein is GTPase Era.